Here is a 66-residue protein sequence, read N- to C-terminus: uncharacterized protein (66 aa).

2 helical membrane passes run 5–25 (ALIV…PLVN) and 30–50 (IMFG…VTPL).

It is found in the cell membrane. This is an uncharacterized protein from Bacillus subtilis (strain 168).